We begin with the raw amino-acid sequence, 59 residues long: Lantibiotic lacticin 3147 A1 (59 aa).

Residues 1-29 constitute a propeptide that is removed on maturation; that stretch reads MNKNEIETQPVTWLEEVSDQNFDEDVFGA. A cross-link (lanthionine (Cys-Ser)) is located at residues 30–31; sequence CS. 2,3-didehydrobutyrine is present on residues threonine 32 and threonine 34. The residue at position 36 (serine 36) is a 2,3-didehydroalanine (Ser). Positions 38–48 form a cross-link, lanthionine (Ser-Cys); sequence SDYWGNNGAWC. 2 cross-links (beta-methyllanthionine (Thr-Cys)) span residues 49 to 54 and 51 to 58; these read TLTHEC and THECMAWC.

In terms of processing, maturation of lantibiotics involves the enzymatic conversion of Thr, and Ser into dehydrated AA and the formation of thioether bonds with cysteine. This is followed by membrane translocation and cleavage of the modified precursor. It is not established whether the 2,3-didehydrobutyrines are the E- or Z-isomers. In the NMR model they were assumed to be the Z-isomer.

It is found in the secreted. In terms of biological role, lanthionine-containing peptide antibiotic (lantibiotic) active on Gram-positive bacteria. The bactericidal activity of lantibiotics is based on depolarization of energized bacterial cytoplasmic membranes, initiated by the formation of aqueous transmembrane pores. When present individually lacticin 3147 A1 exhibits strong activity towards L.lactis strain AM2, weak activity towards L.lactis strain HP and no activity towards L.lactis strain IFPL359, but when combined with lacticin 3147 A2 it displays strong activity towards all three strains. The polypeptide is Lantibiotic lacticin 3147 A1 (Lactococcus lactis subsp. lactis (Streptococcus lactis)).